A 215-amino-acid chain; its full sequence is MTATASEGDDRIIRESGIDARIALIVQPVLRGIGFRLVRVHLSGQNGLTLQIMAEREDGTMTVEDCEEVSRAVSPALDVDDPIEKAYHLEVSSPGIDRPLVRKSDFVTWTGHLVKMETSVIVADRKRFKGKIAEAGENDVLIERDKAAYGEEPTVRVPYDAIAETRLILTDDLIRDALSKDNRARKEAKKRRGEPDDDVPEGAEADATEEHEQES.

A disordered region spans residues 180-215 (KDNRARKEAKKRRGEPDDDVPEGAEADATEEHEQES). Positions 195–207 (PDDDVPEGAEADA) are enriched in acidic residues.

Belongs to the RimP family.

It localises to the cytoplasm. Functionally, required for maturation of 30S ribosomal subunits. This is Ribosome maturation factor RimP from Mesorhizobium japonicum (strain LMG 29417 / CECT 9101 / MAFF 303099) (Mesorhizobium loti (strain MAFF 303099)).